Reading from the N-terminus, the 470-residue chain is Aminodeoxychorismate synthase component 1 (470 aa).

The protein belongs to the anthranilate synthase component I family. In terms of assembly, monomer. Heterodimer consisting of two non-identical subunits: a glutamine amidotransferase subunit (PabA) and a aminodeoxychorismate synthase subunit (PabB). Mg(2+) serves as cofactor.

The enzyme catalyses chorismate + L-glutamine = 4-amino-4-deoxychorismate + L-glutamate. It functions in the pathway cofactor biosynthesis; tetrahydrofolate biosynthesis; 4-aminobenzoate from chorismate: step 1/2. Its function is as follows. Part of a heterodimeric complex that catalyzes the two-step biosynthesis of 4-amino-4-deoxychorismate (ADC), a precursor of p-aminobenzoate (PABA) and tetrahydrofolate. In the first step, a glutamine amidotransferase (PabA) generates ammonia as a substrate that, along with chorismate, is used in the second step, catalyzed by aminodeoxychorismate synthase (PabB) to produce ADC. In Lactococcus lactis subsp. lactis (Streptococcus lactis), this protein is Aminodeoxychorismate synthase component 1 (pabB).